Reading from the N-terminus, the 208-residue chain is MGGKWSKRVTGWPTVRERMRRAEPAELAADGVGAASRDLEKHGALTSSNTAATNADCAWLEAQEEEEVGFPVKPQVPLRPMTYKAALDLSHFLKEKGGLDGLIYSQKRQDILDLWVYHTQGYFPDWQNYTPGPGIRYPLTFGWCFKLVPVEPEKIEEANKGENNCLLHPMSQHGMDDPEREVLVWKSDSHLAFQHYARELHPEYYKNC.

Residue Gly-2 is the site of N-myristoyl glycine; by host attachment. Phosphoserine; by host is present on Ser-6. Residues 64-67 (EEEE) are acidic; interacts with host PACS1 and PACS2; stabilizes the interaction of NEF/MHC-I with host AP1M1; necessary for MHC-I internalization. An SH3-binding; interaction with Src family tyrosine kinases region spans residues 71 to 80 (PVKPQVPLRP). Residues 74 to 77 (PQVP) carry the PxxP; stabilizes the interaction of NEF/MHC-I with host AP1M1; necessary for MHC-I internalization motif. Residues 110–126 (DILDLWVYHTQGYFPDW) form a mediates dimerization, Nef-PTE1 interaction region. The binding to ATP6V1H stretch occupies residues 150–182 (VEPEKIEEANKGENNCLLHPMSQHGMDDPEREV). A Dileucine internalization motif; necessary for CD4 internalization motif is present at residues 166–167 (LL). The Diacidic; necessary for CD4 internalization motif lies at 176 to 177 (DD).

It belongs to the lentivirus primate group Nef protein family. Monomer; cytosolic form. Homodimer; membrane bound form. Interacts with Nef associated p21-activated kinase (PAK2); this interaction activates PAK2. Associates with the Nef-MHC-I-AP1 complex; this complex is required for MHC-I internalization. Interacts (via C-terminus) with host PI3-kinase. Interacts with host PACS1; this interaction seems to be weak. Interacts with host PACS2. Interacts with host LCK and MAPK3; these interactions inhibit the kinase activity of the latter. Interacts with host ATP6V1H; this interaction may play a role in CD4 endocytosis. Associates with the CD4-Nef-AP2 complex; this complex is required for CD4 internalization. Interacts with host AP2 subunit alpha and AP2 subunit sigma2. Interacts with TCR-zeta chain; this interaction up-regulates the Fas ligand (FasL) surface expression. Interacts with host HCK, LYN, and SRC; these interactions activate the Src family kinases. Interacts with MAP3K5; this interaction inhibits the Fas and TNFR-mediated death signals. Interacts with beta-COP and PTE1. Interacts with human RACK1; this increases Nef phosphorylation by PKC. Interacts with TP53; this interaction decreases the half-life of TP53, protecting the infected cell against p53-mediated apoptosis. In terms of processing, the virion-associated Nef proteins are cleaved by the viral protease to release the soluble C-terminal core protein. Nef is probably cleaved concomitantly with viral structural proteins on maturation of virus particles. Post-translationally, myristoylated. Phosphorylated on serine residues, probably by host PKCdelta and theta.

The protein localises to the host cell membrane. It localises to the virion. Its subcellular location is the secreted. The protein resides in the host Golgi apparatus membrane. Functionally, factor of infectivity and pathogenicity, required for optimal virus replication. Alters numerous pathways of T-lymphocyte function and down-regulates immunity surface molecules in order to evade host defense and increase viral infectivity. Alters the functionality of other immunity cells, like dendritic cells, monocytes/macrophages and NK cells. In terms of biological role, in infected CD4(+) T-lymphocytes, down-regulates the surface MHC-I, mature MHC-II, CD4, CD28, CCR5 and CXCR4 molecules. Mediates internalization and degradation of host CD4 through the interaction of with the cytoplasmic tail of CD4, the recruitment of AP-2 (clathrin adapter protein complex 2), internalization through clathrin coated pits, and subsequent transport to endosomes and lysosomes for degradation. Diverts host MHC-I molecules to the trans-Golgi network-associated endosomal compartments by an endocytic pathway to finally target them for degradation. MHC-I down-regulation may involve AP-1 (clathrin adapter protein complex 1) or possibly Src family kinase-ZAP70/Syk-PI3K cascade recruited by PACS2. In consequence infected cells are masked for immune recognition by cytotoxic T-lymphocytes. Decreasing the number of immune receptors also prevents reinfection by more HIV particles (superinfection). Down-regulates host SERINC3 and SERINC5 thereby excluding these proteins from the viral particles. Virion infectivity is drastically higher when SERINC3 or SERINC5 are excluded from the viral envelope, because these host antiviral proteins impair the membrane fusion event necessary for subsequent virion penetration. Bypasses host T-cell signaling by inducing a transcriptional program nearly identical to that of anti-CD3 cell activation. Interaction with TCR-zeta chain up-regulates the Fas ligand (FasL). Increasing surface FasL molecules and decreasing surface MHC-I molecules on infected CD4(+) cells send attacking cytotoxic CD8+ T-lymphocytes into apoptosis. Its function is as follows. Plays a role in optimizing the host cell environment for viral replication without causing cell death by apoptosis. Protects the infected cells from apoptosis in order to keep them alive until the next virus generation is ready to strike. Inhibits the Fas and TNFR-mediated death signals by blocking MAP3K5/ASK1. Decreases the half-life of TP53, protecting the infected cell against p53-mediated apoptosis. Inhibits the apoptotic signals regulated by the Bcl-2 family proteins through the formation of a Nef/PI3-kinase/PAK2 complex that leads to activation of PAK2 and induces phosphorylation of host BAD. Functionally, extracellular Nef protein targets CD4(+) T-lymphocytes for apoptosis by interacting with CXCR4 surface receptors. The polypeptide is Protein Nef (Human immunodeficiency virus type 1 group M subtype B (isolate MN) (HIV-1)).